We begin with the raw amino-acid sequence, 242 residues long: Sugar fermentation stimulation protein homolog (242 aa).

It belongs to the SfsA family.

This is Sugar fermentation stimulation protein homolog from Enterococcus mundtii.